The sequence spans 256 residues: Inner membrane transport permease YadH (256 aa).

The Periplasmic portion of the chain corresponds to 1–22 (MMHLYWVALKSIWAKEIHRFMR). Positions 22-251 (RIWVQTLVPP…LICWSLIQRG (230 aa)) constitute an ABC transmembrane type-2 domain. Residues 23 to 43 (IWVQTLVPPVITMTLYFIIFG) traverse the membrane as a helical segment. Residues 44–52 (NLIGSRIGD) lie on the Cytoplasmic side of the membrane. A helical membrane pass occupies residues 53 to 73 (MHGFSYMQFIVPGLIMMSVIT). The Periplasmic portion of the chain corresponds to 74–94 (NAYANVASSFFGAKFQRNIEE). A helical membrane pass occupies residues 95–115 (LLVAPVPTHVIIAGYVGGGVA). Residue Arg116 is a topological domain, cytoplasmic. A helical transmembrane segment spans residues 117–137 (GLFVGILVTAISLFFVPFQVH). Position 138 (Ser138) is a topological domain, periplasmic. The chain crosses the membrane as a helical span at residues 139–159 (WVFVALTLVLTAVLFSLAGLL). Topologically, residues 160–169 (NGVFAKTFDD) are cytoplasmic. Residues 170 to 190 (ISLVPTFVLTPLTYLGGVFYS) traverse the membrane as a helical segment. Residues 191-223 (LTLLPPFWQGLSHLNPIVYMISGFRYGFLGIND) lie on the Periplasmic side of the membrane. The chain crosses the membrane as a helical span at residues 224–244 (VPLVTTFGVLVVFIVAFYLIC). Residues 245-256 (WSLIQRGRGLRS) are Cytoplasmic-facing.

Belongs to the ABC-2 integral membrane protein family.

Its subcellular location is the cell inner membrane. This chain is Inner membrane transport permease YadH (yadH), found in Escherichia coli O157:H7.